A 58-amino-acid chain; its full sequence is uncharacterized protein (58 aa).

This is an uncharacterized protein from Bacillus anthracis.